The following is a 118-amino-acid chain: Thioredoxin H-type (118 aa).

The 113-residue stretch at 2 to 114 (AAEEGQVIGC…LQQTIAKHMA (113 aa)) folds into the Thioredoxin domain. Catalysis depends on nucleophile residues Cys-40 and Cys-43. Cys-40 and Cys-43 are oxidised to a cystine.

Belongs to the thioredoxin family. Plant H-type subfamily.

The protein resides in the cytoplasm. Functionally, participates in various redox reactions through the reversible oxidation of the active center dithiol to a disulfide. The H form is known to activate a number of cytosolic enzymes. The chain is Thioredoxin H-type from Ricinus communis (Castor bean).